Here is a 602-residue protein sequence, read N- to C-terminus: UvrABC system protein C (602 aa).

The GIY-YIG domain maps to 15-100 (DQSGVYHYFD…IKQLKPKYNI (86 aa)). Residues 206-241 (SKLISRLKERMEKLAENLRFEEAGELRDRIEKIKRI) enclose the UVR domain.

Belongs to the UvrC family. As to quaternary structure, interacts with UvrB in an incision complex.

The protein localises to the cytoplasm. Its function is as follows. The UvrABC repair system catalyzes the recognition and processing of DNA lesions. UvrC both incises the 5' and 3' sides of the lesion. The N-terminal half is responsible for the 3' incision and the C-terminal half is responsible for the 5' incision. In Wolinella succinogenes (strain ATCC 29543 / DSM 1740 / CCUG 13145 / JCM 31913 / LMG 7466 / NCTC 11488 / FDC 602W) (Vibrio succinogenes), this protein is UvrABC system protein C.